We begin with the raw amino-acid sequence, 121 residues long: Large ribosomal subunit protein bL20 (121 aa).

This sequence belongs to the bacterial ribosomal protein bL20 family.

Functionally, binds directly to 23S ribosomal RNA and is necessary for the in vitro assembly process of the 50S ribosomal subunit. It is not involved in the protein synthesizing functions of that subunit. This Persephonella marina (strain DSM 14350 / EX-H1) protein is Large ribosomal subunit protein bL20.